Consider the following 1039-residue polypeptide: Potassium-transporting ATPase alpha chain 2 (1039 aa).

The Cytoplasmic portion of the chain corresponds to 1–102 (MHQKTPEIYS…NSLTPPKQTP (102 aa)). A helical membrane pass occupies residues 103–123 (EIVKFLKQMVGGFSILLWVGA). Residues 124–146 (FLCWIAYGIQYSSDKSASLNNVY) are Lumenal-facing. Residues 147 to 167 (LGCVLGLVVILTGIFAYYQEA) traverse the membrane as a helical segment. At 168 to 303 (KSTNIMSSFN…NEKTPIAIEI (136 aa)) the chain is on the cytoplasmic side. Residues 304-323 (EHFVHIVAGVAVSIGILFFI) traverse the membrane as a helical segment. Residues 324-335 (IAVSLKYQVLDS) lie on the Lumenal side of the membrane. The chain crosses the membrane as a helical span at residues 336–353 (IIFLIGIIVANVPEGLLA). Residues 354-787 (TVTVTLSLTA…EEGRLIFDNL (434 aa)) lie on the Cytoplasmic side of the membrane. Asp391 functions as the 4-aspartylphosphate intermediate in the catalytic mechanism. Mg(2+) contacts are provided by Asp732 and Asp736. The helical transmembrane segment at 788 to 807 (KKTIAYSLTKNIAELCPFLI) threads the bilayer. Topologically, residues 808 to 817 (YIIVGLPLPI) are lumenal. The chain crosses the membrane as a helical span at residues 818–838 (GTITILFIDLGTDIIPSIALA). Over 839 to 858 (YEKAESDIMNRKPRHKNKDR) the chain is Cytoplasmic. The chain crosses the membrane as a helical span at residues 859 to 881 (LVNQPLAVYSYLHIGLMQALGAF). The Lumenal segment spans residues 882–933 (LVYFTVYAQEGFLPRTLINLRVEWEKDYVNDLKDSYGQEWTRYQREYLEWTG). The chain crosses the membrane as a helical span at residues 934–953 (YTAFFVGILVQQIADLIIRK). Residues 954-967 (TRRNSIFQQGLFRN) are Cytoplasmic-facing. Ser958 is subject to Phosphoserine; by PKA. A helical membrane pass occupies residues 968-986 (KVIWVGITSQIIIGLILSY). Residues 987–1001 (GLGSVTALSFTMLRA) lie on the Lumenal side of the membrane. A helical membrane pass occupies residues 1002–1022 (QYWFVAVPHAILIWVYDEVRK). Over 1023–1039 (LFIRLYPGSWWDKNMYY) the chain is Cytoplasmic.

It belongs to the cation transport ATPase (P-type) (TC 3.A.3) family. Type IIC subfamily. The ATPase pump is composed of a catalytic alpha subunit and an auxiliary non-catalytic beta subunit. The alpha subunit pairs with the beta subunit of gastric H(+)/K(+) ATPase ATP4B or the beta subunit of Na(+)/K(+) ATPases ATP1B1 and ATP1B3; this interaction is required for the formation of a functionally active pump and its targeting at the plasma membrane. As to expression, expressed in airway epithelial cells (at protein level). Found in skin and kidney. Detected in prostate basal cells (at protein level). Expression is increased in benign prostate hyperplasia and tumor tissues (at protein level).

It is found in the apical cell membrane. The enzyme catalyses K(+)(out) + ATP + H2O + H(+)(in) = K(+)(in) + ADP + phosphate + 2 H(+)(out). The catalysed reaction is K(+)(out) + Na(+)(in) + ATP + H2O = K(+)(in) + Na(+)(out) + ADP + phosphate + H(+). The ATPase activity is regulated by monovalent cations and pH. Up-regulated by K(+) ions in a dose-dependent way. Down-regulated by Na(+) ions. Inhibited by Na(+)/K(+)-ATPase inhibitor ouabain and H(+)/K(+)-ATPase inhibitor SCH-28080 with an intermediate sensitivity to completely resistant Na(+)/K(+)-ATPases and highly sensitive H(+)/K(+)-ATPases. The catalytic subunit of a H(+)/K(+) ATPase and/or Na(+)/K(+) ATPase pump which transports K(+) ions in exchange for Na(+) and/or H(+) ions across the apical membrane of epithelial cells. Uses ATP as an energy source to pump K(+) ions into the cell while transporting Na(+) and/or H(+) ions to the extracellular compartment. Involved in the maintenance of electrolyte homeostasis through K(+) ion absorption in kidney and colon. In the airway epithelium, may play a primary role in mucus acidification regulating its viscosity and clearance. The chain is Potassium-transporting ATPase alpha chain 2 from Homo sapiens (Human).